A 1196-amino-acid chain; its full sequence is MESIGSHCCSSPFTFITRNSSSSLPRLVNITHRVNLSHQSHRLRNSNSRLTCTATSSSTIEEQRKKKDGSGTKVRLNVRLDHQVNFGDHVAMFGSAKEIGSWKKKSPLNWSENGWVCELELDGGQVLEYKFVIVKNDGSLSWESGDNRVLKVPNSGNFSVVCHWDATRETLDLPQEVGNDDDVGDGGHERDNHDVGDDRVVGSENGAQLQKSTLGGQWQGKDASFMRSNDHGNREVGRNWDTSGLEGTALKMVEGDRNSKNWWRKLEMVREVIVGSVEREERLKALIYSAIYLKWINTGQIPCFEDGGHHRPNRHAEISRLIFRELEHICSKKDATPEEVLVARKIHPCLPSFKAEFTAAVPLTRIRDIAHRNDIPHDLKQEIKHTIQNKLHRNAGPEDLIATEAMLQRITETPGKYSGDFVEQFKIFHNELKDFFNAGSLTEQLDSMKISMDDRGLSALNLFFECKKRLDTSGESSNVLELIKTMHSLASLRETIIKELNSGLRNDAPDTAIAMRQKWRLCEIGLEDYFFVLLSRFLNALETMGGADQLAKDVGSRNVASWNDPLDALVLGVHQVGLSGWKQEECLAIGNELLAWRERDLLEKEGEEDGKTIWAMRLKATLDRARRLTAEYSDLLLQIFPPNVEILGKALGIPENSVKTYTEAEIRAGIIFQISKLCTVLLKAVRNSLGSEGWDVVVPGSTSGTLVQVESIVPGSLPATSGGPIILLVNKADGDEEVSAANGNIAGVMLLQELPHLSHLGVRARQEKIVFVTCDDDDKVADIRRLVGKFVRLEASPSHVNLILSTEGRSRTSKSSATKKTDKNSLSKKKTDKKSLSIDDEESKPGSSSSNSLLYSSKDIPSGGIIALADADVPTSGSKSAACGLLASLAEASSKVHSEHGVPASFKVPTGVVIPFGSMELALKQNNSEEKFASLLEKLETARPEGGELDDICDQIHEVMKTLQVPKETINSISKAFLKDARLIVRSSANVEDLAGMSAAGLYESIPNVSPSDPLVFSDSVCQVWASLYTRRAVLSRRAAGVSQREASMAVLVQEMLSPDLSFVLHTVSPADPDSNLVEAEIAPGLGETLASGTRGTPWRLASGKLDGIVQTLAFANFSEELLVSGTGPADGKYVRLTVDYSKKRLTVDSVFRQQLGQRLGSVGFFLERNFGCAQDVEGCLVGEDVYIVQSRPQPL.

Residues 1–54 constitute a chloroplast transit peptide; it reads MESIGSHCCSSPFTFITRNSSSSLPRLVNITHRVNLSHQSHRLRNSNSRLTCTA. An N-acetylthreonine modification is found at Thr-55. Positions 66–166 constitute a CBM20 domain; it reads KKDGSGTKVR…NFSVVCHWDA (101 aa). The interval 174–200 is disordered; that stretch reads PQEVGNDDDVGDGGHERDNHDVGDDRV. Residues 185–200 show a composition bias toward basic and acidic residues; that stretch reads DGGHERDNHDVGDDRV. His-759 acts as the Tele-phosphohistidine intermediate in catalysis. The tract at residues 804-855 is disordered; that stretch reads LSTEGRSRTSKSSATKKTDKNSLSKKKTDKKSLSIDDEESKPGSSSSNSLLY.

The protein belongs to the PEP-utilizing enzyme family. As to quaternary structure, homodimer. Mg(2+) serves as cofactor. In all starch containing tissues (e.g. roots, leaves, stems, inflorescence and siliques).

Its subcellular location is the plastid. It is found in the chloroplast. The enzyme catalyses [(1-&gt;4)-6-phospho-alpha-D-glucosyl](n) + n ATP + n H2O = [(1-&gt;4)-3,6-bisphospho-alpha-D-glucosyl](n) + n AMP + n phosphate + 2n H(+). Functionally, mediates the incorporation of phosphate into starch-like phospho-alpha-glucan, mostly at the C-3 position of glucose units. Required for starch degradation, suggesting that the phosphate content of starch regulates its degradability. The protein is Phosphoglucan, water dikinase, chloroplastic (GWD3) of Arabidopsis thaliana (Mouse-ear cress).